We begin with the raw amino-acid sequence, 434 residues long: Chaperone SurA (434 aa).

The first 29 residues, 1 to 29 (MKTLRLNFRSAILKALGALLLLQGCLAHA), serve as a signal peptide directing secretion. 2 PpiC domains span residues 180 to 281 (AEEY…AMLE) and 290 to 389 (VEQS…QVQD).

The protein resides in the periplasm. It catalyses the reaction [protein]-peptidylproline (omega=180) = [protein]-peptidylproline (omega=0). Its function is as follows. Chaperone involved in the correct folding and assembly of outer membrane proteins. Recognizes specific patterns of aromatic residues and the orientation of their side chains, which are found more frequently in integral outer membrane proteins. May act in both early periplasmic and late outer membrane-associated steps of protein maturation. The sequence is that of Chaperone SurA from Hahella chejuensis (strain KCTC 2396).